We begin with the raw amino-acid sequence, 473 residues long: UDP-N-acetylmuramoylalanine--D-glutamate ligase (473 aa).

Position 120–126 (120–126 (GSNGKTT)) interacts with ATP.

Belongs to the MurCDEF family.

It is found in the cytoplasm. The enzyme catalyses UDP-N-acetyl-alpha-D-muramoyl-L-alanine + D-glutamate + ATP = UDP-N-acetyl-alpha-D-muramoyl-L-alanyl-D-glutamate + ADP + phosphate + H(+). It participates in cell wall biogenesis; peptidoglycan biosynthesis. Functionally, cell wall formation. Catalyzes the addition of glutamate to the nucleotide precursor UDP-N-acetylmuramoyl-L-alanine (UMA). This is UDP-N-acetylmuramoylalanine--D-glutamate ligase from Nitrosospira multiformis (strain ATCC 25196 / NCIMB 11849 / C 71).